A 164-amino-acid polypeptide reads, in one-letter code: tRNA (cytidine(34)-2'-O)-methyltransferase (164 aa).

The S-adenosyl-L-methionine site is built by M80, G102, V124, and S132.

The protein belongs to the class IV-like SAM-binding methyltransferase superfamily. RNA methyltransferase TrmH family. TrmL subfamily. As to quaternary structure, homodimer.

Its subcellular location is the cytoplasm. The enzyme catalyses cytidine(34) in tRNA + S-adenosyl-L-methionine = 2'-O-methylcytidine(34) in tRNA + S-adenosyl-L-homocysteine + H(+). It catalyses the reaction 5-carboxymethylaminomethyluridine(34) in tRNA(Leu) + S-adenosyl-L-methionine = 5-carboxymethylaminomethyl-2'-O-methyluridine(34) in tRNA(Leu) + S-adenosyl-L-homocysteine + H(+). Methylates the ribose at the nucleotide 34 wobble position in the two leucyl isoacceptors tRNA(Leu)(CmAA) and tRNA(Leu)(cmnm5UmAA). Catalyzes the methyl transfer from S-adenosyl-L-methionine to the 2'-OH of the wobble nucleotide. In Polaromonas sp. (strain JS666 / ATCC BAA-500), this protein is tRNA (cytidine(34)-2'-O)-methyltransferase.